We begin with the raw amino-acid sequence, 312 residues long: tRNA-cytidine(32) 2-sulfurtransferase (312 aa).

Residues 39-44 (SGGKDS) carry the PP-loop motif motif. 3 residues coordinate [4Fe-4S] cluster: cysteine 114, cysteine 117, and cysteine 205.

It belongs to the TtcA family. In terms of assembly, homodimer. Requires Mg(2+) as cofactor. [4Fe-4S] cluster serves as cofactor.

It localises to the cytoplasm. The enzyme catalyses cytidine(32) in tRNA + S-sulfanyl-L-cysteinyl-[cysteine desulfurase] + AH2 + ATP = 2-thiocytidine(32) in tRNA + L-cysteinyl-[cysteine desulfurase] + A + AMP + diphosphate + H(+). It functions in the pathway tRNA modification. In terms of biological role, catalyzes the ATP-dependent 2-thiolation of cytidine in position 32 of tRNA, to form 2-thiocytidine (s(2)C32). The sulfur atoms are provided by the cysteine/cysteine desulfurase (IscS) system. This chain is tRNA-cytidine(32) 2-sulfurtransferase, found in Cupriavidus pinatubonensis (strain JMP 134 / LMG 1197) (Cupriavidus necator (strain JMP 134)).